A 380-amino-acid chain; its full sequence is Glucose ABC transporter permease protein TsgB13 (380 aa).

The next 10 helical transmembrane spans lie at Gly20–Leu40, Gln59–Leu81, Gly94–Ala114, Val115–Ile135, Ile148–Leu166, Ile202–Thr222, Val255–Ile275, Phe282–Gly301, Ala305–Val325, and Ala328–Ile348.

It belongs to the binding-protein-dependent transport system permease family. In terms of assembly, the complex is composed of two ATP-binding proteins (TsgD13), two transmembrane proteins (TsgB13 and TsgC13) and a solute-binding protein (TsgA13).

The protein localises to the cell membrane. Its function is as follows. Part of an ABC transporter complex involved in glucose import. Responsible for the translocation of the substrate across the membrane. This Haloferax volcanii (strain ATCC 29605 / DSM 3757 / JCM 8879 / NBRC 14742 / NCIMB 2012 / VKM B-1768 / DS2) (Halobacterium volcanii) protein is Glucose ABC transporter permease protein TsgB13 (tsgB13).